Here is a 161-residue protein sequence, read N- to C-terminus: Ureidoglycolate lyase (161 aa).

This sequence belongs to the ureidoglycolate lyase family. In terms of assembly, homodimer. Ni(2+) is required as a cofactor.

The catalysed reaction is (S)-ureidoglycolate = urea + glyoxylate. It participates in nitrogen metabolism; (S)-allantoin degradation. Functionally, catalyzes the catabolism of the allantoin degradation intermediate (S)-ureidoglycolate, generating urea and glyoxylate. Involved in the utilization of allantoin as nitrogen source. This is Ureidoglycolate lyase from Rhodobacter capsulatus (strain ATCC BAA-309 / NBRC 16581 / SB1003).